The primary structure comprises 232 residues: Ribosomal RNA small subunit methyltransferase G (232 aa).

S-adenosyl-L-methionine is bound by residues Gly-93, Leu-98, 144 to 145, and Arg-163; that span reads VE.

It belongs to the methyltransferase superfamily. RNA methyltransferase RsmG family.

The protein localises to the cytoplasm. The enzyme catalyses guanosine(527) in 16S rRNA + S-adenosyl-L-methionine = N(7)-methylguanosine(527) in 16S rRNA + S-adenosyl-L-homocysteine. Functionally, specifically methylates the N7 position of guanine in position 527 of 16S rRNA. The sequence is that of Ribosomal RNA small subunit methyltransferase G from Burkholderia pseudomallei (strain 1710b).